The primary structure comprises 239 residues: Small ribosomal subunit protein uS3 (239 aa).

In terms of domain architecture, KH type-2 spans 38-106 (IRELIEERFK…KTFVNVVEIK (69 aa)).

Belongs to the universal ribosomal protein uS3 family. Part of the 30S ribosomal subunit. Forms a tight complex with proteins S10 and S14.

Binds the lower part of the 30S subunit head. Binds mRNA in the 70S ribosome, positioning it for translation. This Elusimicrobium minutum (strain Pei191) protein is Small ribosomal subunit protein uS3.